A 309-amino-acid chain; its full sequence is Uracil phosphoribosyltransferase homolog (309 aa).

The segment at 1–41 (MATELQCPDSMPCHNQQVNSASTPSPEQLRPGDPILDHAGG) is disordered. A compositionally biased stretch (polar residues) spans 13 to 26 (CHNQQVNSASTPSP). Phosphoserine is present on S25. GTP is bound by residues R133, R142, and 176–179 (EKGN). R186 is a binding site for 5-phospho-alpha-D-ribose 1-diphosphate. Residues R203 and R232 each contribute to the GTP site. 5-phospho-alpha-D-ribose 1-diphosphate is bound at residue 238–246 (YPILSTGNT). 299–301 (THF) is a binding site for uracil.

Belongs to the UPRTase family.

It localises to the cytoplasm. The protein localises to the nucleus. This Macaca fascicularis (Crab-eating macaque) protein is Uracil phosphoribosyltransferase homolog (UPRT).